Consider the following 130-residue polypeptide: Transcription antitermination protein NusB (130 aa).

This sequence belongs to the NusB family.

Functionally, involved in transcription antitermination. Required for transcription of ribosomal RNA (rRNA) genes. Binds specifically to the boxA antiterminator sequence of the ribosomal RNA (rrn) operons. The sequence is that of Transcription antitermination protein NusB from Bacillus cereus (strain B4264).